The primary structure comprises 212 residues: Cytidylate kinase (212 aa).

ATP is bound at residue 7–15; the sequence is GPAASGKGT.

It belongs to the cytidylate kinase family. Type 1 subfamily.

The protein resides in the cytoplasm. The enzyme catalyses CMP + ATP = CDP + ADP. It catalyses the reaction dCMP + ATP = dCDP + ADP. The protein is Cytidylate kinase of Bradyrhizobium sp. (strain ORS 278).